A 571-amino-acid chain; its full sequence is Phosphomethylpyrimidine synthase (571 aa).

Substrate contacts are provided by residues N201, M230, Y259, H295, 315 to 317, 356 to 359, and E395; these read SRG and DALR. Residue H399 participates in Zn(2+) binding. Y422 contributes to the substrate binding site. A Zn(2+)-binding site is contributed by H463. [4Fe-4S] cluster contacts are provided by C545, C548, and C553.

It belongs to the ThiC family. It depends on [4Fe-4S] cluster as a cofactor.

It carries out the reaction 5-amino-1-(5-phospho-beta-D-ribosyl)imidazole + S-adenosyl-L-methionine = 4-amino-2-methyl-5-(phosphooxymethyl)pyrimidine + CO + 5'-deoxyadenosine + formate + L-methionine + 3 H(+). The protein operates within cofactor biosynthesis; thiamine diphosphate biosynthesis. Functionally, catalyzes the synthesis of the hydroxymethylpyrimidine phosphate (HMP-P) moiety of thiamine from aminoimidazole ribotide (AIR) in a radical S-adenosyl-L-methionine (SAM)-dependent reaction. In Chlorobium phaeovibrioides (strain DSM 265 / 1930) (Prosthecochloris vibrioformis (strain DSM 265)), this protein is Phosphomethylpyrimidine synthase.